Here is a 4467-residue protein sequence, read N- to C-terminus: Protocadherin-like protein (4467 aa).

Residues 1-22 (MRGINAIVGFLLCFCLLHRINT) form the signal peptide. Cadherin domains lie at 23-128 (AVQF…SPTF), 129-238 (PQHL…SPVF), 239-350 (EKKS…VPVF), 351-455 (QEES…TPVF), 459-566 (NPQQ…NPDF), 567-664 (SKVV…PPTF), 665-764 (KNAP…PPTF), 765-884 (SRSS…SPEF), 885-994 (SQTS…PPLF), 1092-1197 (EAQP…QPRF), 1290-1395 (SRTV…SPKF), 1396-1499 (SADS…PPKF), 1495-1597 (GPPK…EPQF), 1601-1701 (SNGF…QPVR), 1793-1891 (TMID…KPQF), 1892-1992 (SESA…YPKF), 1993-2100 (EPNL…KPQF), 2101-2202 (LESD…RPVF), 2203-2312 (TDCP…FPFF), 2313-2423 (LTRT…PPAF), 2425-2529 (PSAV…TPTF), 2530-2639 (KLEE…PPIF), 2640-2746 (PKPS…IPKF), 2747-2849 (DNLI…SPYF), 2850-2954 (PNPP…APVF), 2955-3062 (NPRE…PPVF), 3063-3170 (VPAE…GPWF), and 3173-3288 (RYYE…EPFD). The Extracellular segment spans residues 23–4258 (AVQFKQEILE…RPSSRWANPA (4236 aa)). The region spanning 3551–3589 (PDINCTTGTPCLHGGTCHNAVPKGIICECGRDYLGPECQ) is the EGF-like 1 domain. 7 cysteine pairs are disulfide-bonded: Cys3555/Cys3567, Cys3561/Cys3577, Cys3579/Cys3588, Cys3762/Cys3788, Cys3794/Cys3803, Cys3797/Cys3812, and Cys3814/Cys3823. The 199-residue stretch at 3590–3788 (STTRTFRGNS…LKEVNTELGC (199 aa)) folds into the Laminin G-like 1 domain. An EGF-like 2 domain is found at 3790–3824 (LNNQCPNCNGRGYCEPFWNYAICVCDLGFGGANCD). The Laminin G-like 2 domain maps to 3842 to 4096 (VKQVKRKRRE…KVIISSSGGS (255 aa)). The tract at residues 4089-4118 (IISSSGGSVSGGSGGASGGSGGASGSGGSV) is disordered. Over residues 4096-4118 (SVSGGSGGASGGSGGASGSGGSV) the composition is skewed to gly residues. The 33-residue stretch at 4206–4238 (PCGSNFCRHGGTCVSADPPYCLCPVGWSGPVCE) folds into the EGF-like 3 domain. 3 disulfides stabilise this stretch: Cys4207/Cys4218, Cys4212/Cys4226, and Cys4228/Cys4237. A helical membrane pass occupies residues 4259-4279 (VIACILVILLAILVIIGAVLL). Topologically, residues 4280 to 4467 (KRRPQPAVVA…NLNRIFNEDE (188 aa)) are cytoplasmic. A disordered region spans residues 4424-4445 (DVDDLSELGDSDEEPDEEEEQE).

Component of the acid-insoluble organic matrix of the aragonitic skeleton (at protein level).

The protein resides in the membrane. The sequence is that of Protocadherin-like protein from Acropora millepora (Staghorn coral).